Here is an 81-residue protein sequence, read N- to C-terminus: uncharacterized protein (81 aa).

To yeast YDL157C.

It is found in the mitochondrion. This is an uncharacterized protein from Schizosaccharomyces pombe (strain 972 / ATCC 24843) (Fission yeast).